A 424-amino-acid chain; its full sequence is S-inosyl-L-homocysteine hydrolase (424 aa).

Substrate-binding residues include D130 and E155. 156-158 lines the NAD(+) pocket; the sequence is TTT. Substrate is bound by residues K185 and D189. NAD(+) contacts are provided by residues N190, 219 to 224, E242, N277, 298 to 300, and N346; these read GYGWCG and AGH.

This sequence belongs to the adenosylhomocysteinase family. NAD(+) serves as cofactor.

The protein localises to the cytoplasm. The catalysed reaction is S-inosyl-L-homocysteine + H2O = L-homocysteine + inosine. Its pathway is amino-acid biosynthesis; S-adenosyl-L-methionine biosynthesis. Its function is as follows. Catalyzes the hydrolysis of S-inosyl-L-homocysteine (SIH) to L-homocysteine (Hcy) and inosine. Likely functions in a S-adenosyl-L-methionine (SAM) recycling pathway from S-adenosyl-L-homocysteine (SAH) produced from SAM-dependent methylation reactions. Can also catalyze the reverse reaction in vitro, i.e. the synthesis of SIH from Hcy and inosine. The chain is S-inosyl-L-homocysteine hydrolase from Methanopyrus kandleri (strain AV19 / DSM 6324 / JCM 9639 / NBRC 100938).